The sequence spans 436 residues: GTPase Der (436 aa).

EngA-type G domains lie at 4-167 (PVVA…PKEE) and 176-351 (VKFS…DNHS). Residues 10-17 (GRPNVGKS), 57-61 (DTGGI), 119-122 (NKVD), 182-189 (GRPNVGKS), 229-233 (DTAGM), and 294-297 (NKWD) each bind GTP. A KH-like domain is found at 352–436 (LRVQSSMLND…PIRVIARKRK (85 aa)).

The protein belongs to the TRAFAC class TrmE-Era-EngA-EngB-Septin-like GTPase superfamily. EngA (Der) GTPase family. Associates with the 50S ribosomal subunit.

GTPase that plays an essential role in the late steps of ribosome biogenesis. The sequence is that of GTPase Der from Listeria welshimeri serovar 6b (strain ATCC 35897 / DSM 20650 / CCUG 15529 / CIP 8149 / NCTC 11857 / SLCC 5334 / V8).